A 704-amino-acid chain; its full sequence is ATP-dependent zinc metalloprotease FtsH (704 aa).

Over M1–T17 the chain is Cytoplasmic. A helical transmembrane segment spans residues G18–G38. Residues R39–S127 are Extracellular-facing. The chain crosses the membrane as a helical span at residues T128–M148. Residues N149–R704 are Cytoplasmic-facing. G217–T224 is a binding site for ATP. Position 439 (H439) interacts with Zn(2+). The active site involves E440. Zn(2+) is bound by residues H443 and D515. Residues P624–R704 are disordered. Residues P681–R704 show a composition bias toward gly residues.

In the central section; belongs to the AAA ATPase family. This sequence in the C-terminal section; belongs to the peptidase M41 family. In terms of assembly, homohexamer. Requires Zn(2+) as cofactor.

It is found in the cell membrane. Its function is as follows. Acts as a processive, ATP-dependent zinc metallopeptidase for both cytoplasmic and membrane proteins. Plays a role in the quality control of integral membrane proteins. The sequence is that of ATP-dependent zinc metalloprotease FtsH from Brachybacterium faecium (strain ATCC 43885 / DSM 4810 / JCM 11609 / LMG 19847 / NBRC 14762 / NCIMB 9860 / 6-10).